Here is a 481-residue protein sequence, read N- to C-terminus: Glycogen synthase (481 aa).

Lys-16 contacts ADP-alpha-D-glucose.

The protein belongs to the glycosyltransferase 1 family. Bacterial/plant glycogen synthase subfamily.

It carries out the reaction [(1-&gt;4)-alpha-D-glucosyl](n) + ADP-alpha-D-glucose = [(1-&gt;4)-alpha-D-glucosyl](n+1) + ADP + H(+). The protein operates within glycan biosynthesis; glycogen biosynthesis. In terms of biological role, synthesizes alpha-1,4-glucan chains using ADP-glucose. This is Glycogen synthase from Lacticaseibacillus casei (strain BL23) (Lactobacillus casei).